The sequence spans 414 residues: 3-oxo-tetronate kinase (414 aa).

Residues S255, 355–358 (GGET), and G398 contribute to the ATP site.

It belongs to the four-carbon acid sugar kinase family.

It catalyses the reaction 3-dehydro-L-erythronate + ATP = 3-dehydro-4-O-phospho-L-erythronate + ADP + H(+). The catalysed reaction is 3-dehydro-D-erythronate + ATP = 3-dehydro-4-O-phospho-D-erythronate + ADP + H(+). Catalyzes the ATP-dependent phosphorylation of 3-oxo-tetronate to 3-oxo-tetronate 4-phosphate. The polypeptide is 3-oxo-tetronate kinase (Actinobacillus succinogenes (strain ATCC 55618 / DSM 22257 / CCUG 43843 / 130Z)).